A 110-amino-acid chain; its full sequence is Large ribosomal subunit protein uL22 (110 aa).

Belongs to the universal ribosomal protein uL22 family. In terms of assembly, part of the 50S ribosomal subunit.

In terms of biological role, this protein binds specifically to 23S rRNA; its binding is stimulated by other ribosomal proteins, e.g. L4, L17, and L20. It is important during the early stages of 50S assembly. It makes multiple contacts with different domains of the 23S rRNA in the assembled 50S subunit and ribosome. Its function is as follows. The globular domain of the protein is located near the polypeptide exit tunnel on the outside of the subunit, while an extended beta-hairpin is found that lines the wall of the exit tunnel in the center of the 70S ribosome. The sequence is that of Large ribosomal subunit protein uL22 from Halorhodospira halophila (strain DSM 244 / SL1) (Ectothiorhodospira halophila (strain DSM 244 / SL1)).